A 331-amino-acid chain; its full sequence is Gamma-parvin (331 aa).

M1 carries the post-translational modification N-acetylmethionine. The segment at E17 to K39 is disordered. Calponin-homology (CH) domains lie at E44–Q151 and N210–T317.

It belongs to the parvin family. In terms of assembly, interacts with ILK; the interaction promotes the establishment of cell polarity required for leukocyte migration. Interacts with ARHGEF6; the guanine nucleotide exchange factor activity of ARHGEF6 is essential for the PARVG-induced enhancement of cell spreading. Expressed predominantly in lymphoid organs, including spleen, thymus, lymph node, bone marrow and peripheral blood leukocytes and moderately in the digestive tract, including stomach, duodenum, jejunum, ileum, ileocecum and appendix, as well as in lung and liver. Also expressed in tumors, but at a lower level than in the corresponding normal tissues.

The protein resides in the cell junction. Its subcellular location is the focal adhesion. The protein localises to the cell membrane. It is found in the cytoplasm. It localises to the cytoskeleton. Its function is as follows. Plays a role with ILK in promoting the cell adhesion and spreading of leukocytes. In Homo sapiens (Human), this protein is Gamma-parvin (PARVG).